The chain runs to 565 residues: Arginine--tRNA ligase (565 aa).

A 'HIGH' region motif is present at residues 121-131 (PNIAKPMGMGH).

It belongs to the class-I aminoacyl-tRNA synthetase family. As to quaternary structure, monomer.

Its subcellular location is the cytoplasm. It catalyses the reaction tRNA(Arg) + L-arginine + ATP = L-arginyl-tRNA(Arg) + AMP + diphosphate. The polypeptide is Arginine--tRNA ligase (Lactobacillus delbrueckii subsp. bulgaricus (strain ATCC BAA-365 / Lb-18)).